The primary structure comprises 97 residues: U6-theraphotoxin-Hhn1a 3 (97 aa).

The signal sequence occupies residues Met-1 to Ala-33. Positions Ser-34 to Arg-61 are excised as a propeptide. 3 disulfides stabilise this stretch: Cys-63–Cys-77, Cys-70–Cys-82, and Cys-76–Cys-89.

This sequence belongs to the neurotoxin 10 (Hwtx-1) family. 12 (Hntx-12) subfamily. As to expression, expressed by the venom gland.

Its subcellular location is the secreted. Its function is as follows. Ion channel inhibitor. The chain is U6-theraphotoxin-Hhn1a 3 from Cyriopagopus hainanus (Chinese bird spider).